A 126-amino-acid chain; its full sequence is UPF0102 protein P9303_16141 (126 aa).

This sequence belongs to the UPF0102 family.

The sequence is that of UPF0102 protein P9303_16141 from Prochlorococcus marinus (strain MIT 9303).